The primary structure comprises 576 residues: D-lactate dehydrogenase [cytochrome], mitochondrial (576 aa).

One can recognise an FAD-binding PCMH-type domain in the interval 139–320 (EANQRPEIVL…TEATIKCHVR (182 aa)).

The protein belongs to the FAD-binding oxidoreductase/transferase type 4 family. Requires FAD as cofactor. Zn(2+) serves as cofactor.

The protein localises to the mitochondrion matrix. The catalysed reaction is (R)-lactate + 2 Fe(III)-[cytochrome c] = 2 Fe(II)-[cytochrome c] + pyruvate + 2 H(+). Its function is as follows. Catalyzes the stereospecific oxidation of D-lactate to pyruvate. The sequence is that of D-lactate dehydrogenase [cytochrome], mitochondrial (DLD1) from Kluyveromyces lactis (strain ATCC 8585 / CBS 2359 / DSM 70799 / NBRC 1267 / NRRL Y-1140 / WM37) (Yeast).